We begin with the raw amino-acid sequence, 143 residues long: 3-hydroxyacyl-[acyl-carrier-protein] dehydratase FabZ (143 aa).

H49 is a catalytic residue.

This sequence belongs to the thioester dehydratase family. FabZ subfamily.

Its subcellular location is the cytoplasm. It carries out the reaction a (3R)-hydroxyacyl-[ACP] = a (2E)-enoyl-[ACP] + H2O. In terms of biological role, involved in unsaturated fatty acids biosynthesis. Catalyzes the dehydration of short chain beta-hydroxyacyl-ACPs and long chain saturated and unsaturated beta-hydroxyacyl-ACPs. In Ehrlichia chaffeensis (strain ATCC CRL-10679 / Arkansas), this protein is 3-hydroxyacyl-[acyl-carrier-protein] dehydratase FabZ.